A 257-amino-acid polypeptide reads, in one-letter code: ECF RNA polymerase sigma factor SigE (257 aa).

The tract at residues 87-153 (LVRQHADRVY…FLDMVRRRAR (67 aa)) is sigma-70 factor domain-2. The short motif at 111–114 (DLTQ) is the Polymerase core binding element. Residues 186–236 (LQAALASLPPEFRAAVVLCDIEGLSYEEIGATLGVKLGTVRSRIHRGRQAL) form a sigma-70 factor domain-4 region. The H-T-H motif DNA-binding region spans 211-230 (YEEIGATLGVKLGTVRSRIH).

Belongs to the sigma-70 factor family. ECF subfamily. In terms of assembly, interacts transiently with the RNA polymerase catalytic core formed by RpoA, RpoB, RpoC and RpoZ (2 alpha, 1 beta, 1 beta' and 1 omega subunit) to form the RNA polymerase holoenzyme that can initiate transcription. Interacts (via sigma-70 factor domain 4) with cognate anti-sigma-E factor RseA under reducing conditions, which stops the sigma factor from functioning.

In terms of biological role, sigma factors are initiation factors that promote the attachment of RNA polymerase to specific initiation sites and are then released. Extracytoplasmic function (ECF) sigma factors are held in an inactive form by an anti-sigma factor until released. Responds to surface stress (H(2)O(2)). This chain is ECF RNA polymerase sigma factor SigE (sigE), found in Mycobacterium tuberculosis (strain ATCC 35801 / TMC 107 / Erdman).